A 193-amino-acid chain; its full sequence is RNA polymerase sigma-H factor (193 aa).

The short motif at 49 to 62 (DVAQEAFIKAYRAL) is the Polymerase core binding element. Residues 157–176 (YEDIATVMQCPVGTVRSRIF) constitute a DNA-binding region (H-T-H motif).

This sequence belongs to the sigma-70 factor family. ECF subfamily.

In terms of biological role, sigma factors are initiation factors that promote the attachment of RNA polymerase to specific initiation sites and are then released. This sigma factor regulates genes such as algD, involved in alginate biosynthesis. The polypeptide is RNA polymerase sigma-H factor (algU) (Pseudomonas aeruginosa (strain ATCC 15692 / DSM 22644 / CIP 104116 / JCM 14847 / LMG 12228 / 1C / PRS 101 / PAO1)).